We begin with the raw amino-acid sequence, 77 residues long: Small, acid-soluble spore protein Tlp (77 aa).

The protein belongs to the Tlp family.

The protein localises to the spore core. This chain is Small, acid-soluble spore protein Tlp, found in Geobacillus sp. (strain WCH70).